The following is a 391-amino-acid chain: Phosphoglycerate kinase (391 aa).

Residues 16 to 18 (DLN), arginine 31, 54 to 57 (HLGR), arginine 108, and arginine 141 contribute to the substrate site. Residues lysine 192, glutamate 314, and 340 to 343 (GGDT) each bind ATP.

Belongs to the phosphoglycerate kinase family. In terms of assembly, monomer.

The protein localises to the cytoplasm. It carries out the reaction (2R)-3-phosphoglycerate + ATP = (2R)-3-phospho-glyceroyl phosphate + ADP. It participates in carbohydrate degradation; glycolysis; pyruvate from D-glyceraldehyde 3-phosphate: step 2/5. The sequence is that of Phosphoglycerate kinase from Coxiella burnetii (strain RSA 493 / Nine Mile phase I).